A 133-amino-acid chain; its full sequence is Antifungal protein ginkbilobin-like protein 1 (133 aa).

Positions Met-1–Gly-24 are cleaved as a signal peptide. Positions Thr-28–Ile-133 constitute a Gnk2-homologous domain. Disulfide bonds link Cys-35/Cys-111, Cys-87/Cys-96, and Cys-99/Cys-124. Asn-36 contributes to the alpha-D-mannopyranose binding site. Residues Arg-118 and Glu-129 each coordinate alpha-D-mannopyranose.

Exerts antifungal activity through its carbohydrate-binding specificity. This Picea sitchensis (Sitka spruce) protein is Antifungal protein ginkbilobin-like protein 1.